We begin with the raw amino-acid sequence, 212 residues long: Redox-sensing transcriptional repressor Rex (212 aa).

The H-T-H motif DNA-binding region spans 18-57 (LYYRFVNTLKSKGIDRVNSKAISEALNIESATIRRDFSYF). An NAD(+)-binding site is contributed by 92–97 (GVGNLG).

This sequence belongs to the transcriptional regulatory Rex family. In terms of assembly, homodimer.

It localises to the cytoplasm. Its function is as follows. Modulates transcription in response to changes in cellular NADH/NAD(+) redox state. This Staphylococcus haemolyticus (strain JCSC1435) protein is Redox-sensing transcriptional repressor Rex.